The sequence spans 317 residues: Lipoyl synthase (317 aa).

Residues 1-28 are disordered; that stretch reads MDSQPQSKKAARGADKTARNPIPIIPAP. Residues C64, C69, C75, C90, C94, C97, and S304 each contribute to the [4Fe-4S] cluster site. A Radical SAM core domain is found at 76 to 293; that stretch reads FGGGTATFMI…QRDGMAMGFR (218 aa).

The protein belongs to the radical SAM superfamily. Lipoyl synthase family. [4Fe-4S] cluster serves as cofactor.

The protein localises to the cytoplasm. The catalysed reaction is [[Fe-S] cluster scaffold protein carrying a second [4Fe-4S](2+) cluster] + N(6)-octanoyl-L-lysyl-[protein] + 2 oxidized [2Fe-2S]-[ferredoxin] + 2 S-adenosyl-L-methionine + 4 H(+) = [[Fe-S] cluster scaffold protein] + N(6)-[(R)-dihydrolipoyl]-L-lysyl-[protein] + 4 Fe(3+) + 2 hydrogen sulfide + 2 5'-deoxyadenosine + 2 L-methionine + 2 reduced [2Fe-2S]-[ferredoxin]. Its pathway is protein modification; protein lipoylation via endogenous pathway; protein N(6)-(lipoyl)lysine from octanoyl-[acyl-carrier-protein]: step 2/2. In terms of biological role, catalyzes the radical-mediated insertion of two sulfur atoms into the C-6 and C-8 positions of the octanoyl moiety bound to the lipoyl domains of lipoate-dependent enzymes, thereby converting the octanoylated domains into lipoylated derivatives. In Acidithiobacillus ferrooxidans (strain ATCC 23270 / DSM 14882 / CIP 104768 / NCIMB 8455) (Ferrobacillus ferrooxidans (strain ATCC 23270)), this protein is Lipoyl synthase.